An 840-amino-acid polypeptide reads, in one-letter code: Phosphatidylglycerol lysyltransferase (840 aa).

Over 1-8 (MTQELKSK) the chain is Cytoplasmic. The chain crosses the membrane as a helical span at residues 9 to 29 (LLSFFKFIFATALFIFVIFTL). The Extracellular segment spans residues 30 to 52 (YRELSHINFKETFIQFGKINRLW). A helical membrane pass occupies residues 53–73 (LVLLFAGGGLSLILLSLYDII). Residues 74 to 89 (LVKALKLKMPLIRVFR) lie on the Cytoplasmic side of the membrane. The helical transmembrane segment at 90–110 (VSYIINALNSIIGFGGFIGAG) threads the bilayer. Residues 111–129 (VRAFVYKNYTNDTKKLVQY) are Extracellular-facing. Residues 130 to 150 (ISIILVSMLTGLSLLSILVVL) form a helical membrane-spanning segment. Topologically, residues 151-161 (RIFNASHMIDE) are cytoplasmic. The helical transmembrane segment at 162–182 (ISWVRWILYIVALFLPIFIFY) threads the bilayer. Topologically, residues 183-200 (TVARPVDRNNRYMGVYCT) are extracellular. Residues 201–221 (VVSCVEWMAAATVLYFAALIV) traverse the membrane as a helical segment. Topologically, residues 222–229 (DIHISFMT) are cytoplasmic. A helical transmembrane segment spans residues 230–250 (FVGIFVIAALSGLVSFIPGGF). Residues 251–270 (GAFDLVVLLGLKSLGISEEK) are Extracellular-facing. The helical transmembrane segment at 271–291 (ILLALVLYRFAYYFVPVMIAL) threads the bilayer. Residues 292-337 (ILSSFEFGNTAKKYLDNSKYFIPVKDFTSFLRSYQKDILAKVPSFS) are Cytoplasmic-facing. A helical membrane pass occupies residues 338-358 (LAILIFLTSIIFFINNLTIVY). Residues 359-366 (DGLYDGNH) are Extracellular-facing. A helical membrane pass occupies residues 367–387 (FAYYIALAVQTSACLLLILNV). Over 388 to 392 (RGIYK) the chain is Cytoplasmic. Residues 393–413 (GSRRAIIYAFISIILIASATI) traverse the membrane as a helical segment. Residues 414–415 (YT) lie on the Extracellular side of the membrane. A helical transmembrane segment spans residues 416 to 436 (YASFLLLSWLIIIFVLLILAY). Over 437-450 (QRAQVLKRPLRFKK) the chain is Cytoplasmic. The chain crosses the membrane as a helical span at residues 451–471 (LAVMLLLSIFILYLNHILISG). Over 472–489 (TLYALDVYHIEIDTSLLR) the chain is Extracellular. A helical membrane pass occupies residues 490 to 510 (YYFWMTIVIIMLLVGVIAWLF). The Cytoplasmic segment spans residues 511-840 (DYKYKCPHHS…LKVMRVIRHK (330 aa)).

The protein belongs to the LPG synthase family.

It is found in the cell membrane. It catalyses the reaction L-lysyl-tRNA(Lys) + a 1,2-diacyl-sn-glycero-3-phospho-(1'-sn-glycerol) = a 1,2-diacyl-sn-glycero-3-phospho-1'-(3'-O-L-lysyl)-sn-glycerol + tRNA(Lys). Catalyzes the transfer of a lysyl group from L-lysyl-tRNA(Lys) to membrane-bound phosphatidylglycerol (PG), which produces lysylphosphatidylglycerol (LPG), a major component of the bacterial membrane with a positive net charge. LPG synthesis contributes to bacterial virulence as it is involved in the resistance mechanism against cationic antimicrobial peptides (CAMP) produces by the host's immune system (defensins, cathelicidins) and by the competing microorganisms (bacteriocins). In fact, the modification of anionic phosphatidylglycerol with positively charged L-lysine results in repulsion of the peptides. The polypeptide is Phosphatidylglycerol lysyltransferase (mprF) (Staphylococcus epidermidis (strain ATCC 12228 / FDA PCI 1200)).